A 72-amino-acid polypeptide reads, in one-letter code: Translation initiation factor IF-1 (72 aa).

An S1-like domain is found at 1-72 (MAKEESIEVE…SKGRITYRYK (72 aa)).

Belongs to the IF-1 family. In terms of assembly, component of the 30S ribosomal translation pre-initiation complex which assembles on the 30S ribosome in the order IF-2 and IF-3, IF-1 and N-formylmethionyl-tRNA(fMet); mRNA recruitment can occur at any time during PIC assembly.

The protein resides in the cytoplasm. Its function is as follows. One of the essential components for the initiation of protein synthesis. Stabilizes the binding of IF-2 and IF-3 on the 30S subunit to which N-formylmethionyl-tRNA(fMet) subsequently binds. Helps modulate mRNA selection, yielding the 30S pre-initiation complex (PIC). Upon addition of the 50S ribosomal subunit IF-1, IF-2 and IF-3 are released leaving the mature 70S translation initiation complex. This is Translation initiation factor IF-1 from Chlorobaculum tepidum (strain ATCC 49652 / DSM 12025 / NBRC 103806 / TLS) (Chlorobium tepidum).